A 252-amino-acid chain; its full sequence is MKNLFKGLMMSLSMFTIIPMPYVEWDEDGAKNMMKCYPIIGLIVGCVWFLGYKLINYLNISIVLKSALIMIIPFIITGMLHLDGFMDVCDAILSRRDKEEKLRILKDSTTGAFSVISVIILFFIQFGAVHSFLEYNKNPYILMFLPIISRNIVAYFFITIITIKESTLGSYFTKGTNIKDKVILILELALVCILFGSILGYIGIAILLIVAVAISLCVKKCFKEFGGISGDVAGFSLVVGEIVGLFSACLFT.

7 helical membrane passes run 4 to 24, 38 to 58, 60 to 80, 113 to 133, 141 to 161, 190 to 210, and 232 to 252; these read LFKG…PYVE, PIIG…INYL, ISIV…TGML, FSVI…HSFL, ILMF…ITII, LVCI…LLIV, and VAGF…CLFT.

This sequence belongs to the CobS family. Mg(2+) is required as a cofactor.

It is found in the cell membrane. The catalysed reaction is alpha-ribazole + adenosylcob(III)inamide-GDP = adenosylcob(III)alamin + GMP + H(+). The enzyme catalyses alpha-ribazole 5'-phosphate + adenosylcob(III)inamide-GDP = adenosylcob(III)alamin 5'-phosphate + GMP + H(+). It functions in the pathway cofactor biosynthesis; adenosylcobalamin biosynthesis; adenosylcobalamin from cob(II)yrinate a,c-diamide: step 7/7. Its function is as follows. Joins adenosylcobinamide-GDP and alpha-ribazole to generate adenosylcobalamin (Ado-cobalamin). Also synthesizes adenosylcobalamin 5'-phosphate from adenosylcobinamide-GDP and alpha-ribazole 5'-phosphate. This Clostridium botulinum (strain Alaska E43 / Type E3) protein is Adenosylcobinamide-GDP ribazoletransferase.